Reading from the N-terminus, the 188-residue chain is Elongation factor P (188 aa).

Belongs to the elongation factor P family.

The protein localises to the cytoplasm. The protein operates within protein biosynthesis; polypeptide chain elongation. Functionally, involved in peptide bond synthesis. Stimulates efficient translation and peptide-bond synthesis on native or reconstituted 70S ribosomes in vitro. Probably functions indirectly by altering the affinity of the ribosome for aminoacyl-tRNA, thus increasing their reactivity as acceptors for peptidyl transferase. This is Elongation factor P from Phocaeicola vulgatus (strain ATCC 8482 / DSM 1447 / JCM 5826 / CCUG 4940 / NBRC 14291 / NCTC 11154) (Bacteroides vulgatus).